Here is a 638-residue protein sequence, read N- to C-terminus: Threonine--tRNA ligase (638 aa).

Residues 1 to 63 (MVMIQIELPD…TESGRLEIIT (63 aa)) enclose the TGS domain. Residues 245–536 (DHRRIGRELD…LIEHYAGNFP (292 aa)) are catalytic. Residues cysteine 337, histidine 388, and histidine 513 each contribute to the Zn(2+) site.

This sequence belongs to the class-II aminoacyl-tRNA synthetase family. In terms of assembly, homodimer. The cofactor is Zn(2+).

The protein resides in the cytoplasm. The catalysed reaction is tRNA(Thr) + L-threonine + ATP = L-threonyl-tRNA(Thr) + AMP + diphosphate + H(+). Catalyzes the attachment of threonine to tRNA(Thr) in a two-step reaction: L-threonine is first activated by ATP to form Thr-AMP and then transferred to the acceptor end of tRNA(Thr). Also edits incorrectly charged L-seryl-tRNA(Thr). The polypeptide is Threonine--tRNA ligase (Syntrophotalea carbinolica (strain DSM 2380 / NBRC 103641 / GraBd1) (Pelobacter carbinolicus)).